A 369-amino-acid chain; its full sequence is Eukaryotic translation initiation factor 3 subunit F (369 aa).

Positions 31-170 (VNIQPQAVFS…TKTYISAPVA (140 aa)) constitute an MPN domain. Positions 309–334 (LDEGKEGGEKKDGEGAEGDKKTDGQR) are enriched in basic and acidic residues. The interval 309-369 (LDEGKEGGEK…EPREPREAAE (61 aa)) is disordered. Over residues 335 to 353 (GQRGQGGKRGGRSGGAGGR) the composition is skewed to gly residues. Residues 354–369 (GGREQREPREPREAAE) are compositionally biased toward basic and acidic residues.

Belongs to the eIF-3 subunit F family. As to quaternary structure, component of the eukaryotic translation initiation factor 3 (eIF-3) complex.

Its subcellular location is the cytoplasm. Its function is as follows. Component of the eukaryotic translation initiation factor 3 (eIF-3) complex, which is involved in protein synthesis of a specialized repertoire of mRNAs and, together with other initiation factors, stimulates binding of mRNA and methionyl-tRNAi to the 40S ribosome. The eIF-3 complex specifically targets and initiates translation of a subset of mRNAs involved in cell proliferation. The protein is Eukaryotic translation initiation factor 3 subunit F of Neurospora crassa (strain ATCC 24698 / 74-OR23-1A / CBS 708.71 / DSM 1257 / FGSC 987).